The sequence spans 423 residues: AP-1 complex subunit mu-2 (423 aa).

The MHD domain maps to 168–421; sequence KNEVFIDVIE…ITQSGDYQLR (254 aa).

This sequence belongs to the adaptor complexes medium subunit family. Adaptor protein complex 1 (AP-1) is a heterotetramer composed of two large adaptins (gamma-type subunit AP1G1 and beta-type subunit AP1B1), a medium adaptin (mu-type subunit AP1M1 or AP1M2) and a small adaptin (sigma-type subunit AP1S1 or AP1S2 or AP1S3). Interacts with P2X4. Post-translationally, phosphorylation of membrane-bound AP1M1/AP1M2 increases its affinity for sorting signals.

The protein resides in the golgi apparatus. It localises to the cytoplasmic vesicle. The protein localises to the clathrin-coated vesicle membrane. Its function is as follows. Subunit of clathrin-associated adaptor protein complex 1 that plays a role in protein sorting in the trans-Golgi network (TGN) and endosomes. The AP complexes mediate the recruitment of clathrin to membranes and the recognition of sorting signals within the cytosolic tails of transmembrane cargo molecules. The chain is AP-1 complex subunit mu-2 (Ap1m2) from Rattus norvegicus (Rat).